The following is a 79-amino-acid chain: ATP synthase subunit 9, mitochondrial (79 aa).

The next 2 helical transmembrane spans lie at 21-41 and 59-79; these read SGLI…ILAF and FALT…ILFI.

This sequence belongs to the ATPase C chain family. As to quaternary structure, F-type ATPases have 2 components, CF(1) - the catalytic core - and CF(0) - the membrane proton channel. CF(1) has five subunits: alpha(3), beta(3), gamma(1), delta(1), epsilon(1). CF(0) has three main subunits: a, b and c.

The protein localises to the mitochondrion membrane. Mitochondrial membrane ATP synthase (F(1)F(0) ATP synthase or Complex V) produces ATP from ADP in the presence of a proton gradient across the membrane which is generated by electron transport complexes of the respiratory chain. F-type ATPases consist of two structural domains, F(1) - containing the extramembraneous catalytic core and F(0) - containing the membrane proton channel, linked together by a central stalk and a peripheral stalk. During catalysis, ATP synthesis in the catalytic domain of F(1) is coupled via a rotary mechanism of the central stalk subunits to proton translocation. Part of the complex F(0) domain. A homomeric c-ring of probably 10 subunits is part of the complex rotary element. The polypeptide is ATP synthase subunit 9, mitochondrial (ATP9) (Acanthamoeba castellanii (Amoeba)).